The following is a 1401-amino-acid chain: Uveal autoantigen with coiled-coil domains and ankyrin repeats protein (1401 aa).

ANK repeat units lie at residues 25–53, 54–83, 87–116, 120–149, 153–182, and 186–215; these read LMRA…KLDV, EGRS…DITT, AGRN…PTEH, QGRT…SVNA, DGRT…DINS, and QNRT…DVTL. Serine 265 bears the Phosphoserine mark. Coiled coils occupy residues 273-361, 423-827, and 856-1368; these read TKSN…SRFK, ENEI…EKIY, and ALSS…VIAI. Lysine 1020 is covalently cross-linked (Glycyl lysine isopeptide (Lys-Gly) (interchain with G-Cter in SUMO2)).

As to quaternary structure, component of the apoptosome complex, composed of APAF1, pro-caspase-9 and UACA. In the complex, it probably interacts directly with APAF1. Interacts with LGALS3. Interacts with ARF6 and ACTB. Interacts with RAB39A. In terms of tissue distribution, highly expressed in muscle and heart, moderately in liver, kidney and pancreas, and weakly in placenta and lung.

It localises to the nucleus. It is found in the cytoplasm. The protein localises to the cytoskeleton. Functionally, regulates APAF1 expression and plays an important role in the regulation of stress-induced apoptosis. Promotes apoptosis by regulating three pathways, apoptosome up-regulation, LGALS3/galectin-3 down-regulation and NF-kappa-B inactivation. Regulates the redistribution of APAF1 into the nucleus after proapoptotic stress. Down-regulates the expression of LGALS3 by inhibiting NFKB1. In terms of biological role, modulates isoactin dynamics to regulate the morphological alterations required for cell growth and motility. Interaction with ARF6 may modulate cell shape and motility after injury. May be involved in multiple neurite formation. This is Uveal autoantigen with coiled-coil domains and ankyrin repeats protein (UACA) from Bos taurus (Bovine).